The following is a 154-amino-acid chain: MSIEKEKFWASHKQVVKEIGGTNLINGKHDLFKAVAYTSDDIEAVESQFGVPIMGLQFHPEMSMYSNAFTCSEKGRDKKIYLSFQQSVWSFHNKQVLLAEFKNSKHYSKTQHPTEDITEKLINYENNKYNNNIIDIFNETSVEIIGYSNVEILN.

Positions Met1–Lys94 constitute a Glutamine amidotransferase type-1 domain.

This Rickettsia prowazekii (strain Madrid E) protein is Putative glutamine amidotransferase-like protein RP712.